The primary structure comprises 89 residues: Small ribosomal subunit protein uS14 (89 aa).

Belongs to the universal ribosomal protein uS14 family. Part of the 30S ribosomal subunit. Contacts proteins S3 and S10.

Its function is as follows. Binds 16S rRNA, required for the assembly of 30S particles and may also be responsible for determining the conformation of the 16S rRNA at the A site. The chain is Small ribosomal subunit protein uS14 from Latilactobacillus sakei subsp. sakei (strain 23K) (Lactobacillus sakei subsp. sakei).